The chain runs to 91 residues: MSRTVFCHYQQSDAEGLDFVPYPGELGQRIFVQIGKTAWQAWLAHQTMLINENRLSPRDPKHRAFLEAELQKFLFERNADKPEGYVAPVRD.

Belongs to the Fe(2+)-trafficking protein family.

Functionally, could be a mediator in iron transactions between iron acquisition and iron-requiring processes, such as synthesis and/or repair of Fe-S clusters in biosynthetic enzymes. The sequence is that of Probable Fe(2+)-trafficking protein from Xanthomonas euvesicatoria pv. vesicatoria (strain 85-10) (Xanthomonas campestris pv. vesicatoria).